Reading from the N-terminus, the 362-residue chain is MASGSAGKPTGEAASPAPASAIGGASSQPRKRLVSVCDHCKGKMQLVADLLLLSSEARPVLFEGPASSGAGAESFEQCRDTIIARTKGLSILTHDVQSQLNMGRFGEAGDSLVELGDLVVSLTECSAHAAYLAAVATPGAQPAQPGLVDRYRVTRCRHEVEQGCAVLRATPLADMTPQLLLEVSQGLSRNLKFLTDACALASDKSRDRFSREQFKLGVKCMSTSASALLACVREVKVAPSELARSRCALFSGPLVQAVSALVGFATEPQFLGRAAAVSAEGKAVQTAILGGAMSVVSACVLLTQCLRDLAQHPDGGAKMSDHRERLRNSACAVSEGCTLLSQALRERSSPRTLPPVNSNSVN.

The interval 1–26 is disordered; it reads MASGSAGKPTGEAASPAPASAIGGAS. At alanine 2 the chain carries N-acetylalanine. A compositionally biased stretch (low complexity) spans 13-26; the sequence is AASPAPASAIGGAS.

May homodimerize. Interacts with F-actin.

Actin-binding protein which may have an oncogenic function and regulates cell proliferation, migration and invasion in cancer cells. The protein is Talin rod domain-containing protein 1 of Homo sapiens (Human).